The chain runs to 61 residues: Small ribosomal subunit protein uS14 (61 aa).

Zn(2+) contacts are provided by cysteine 24, cysteine 27, cysteine 40, and cysteine 43.

Belongs to the universal ribosomal protein uS14 family. Zinc-binding uS14 subfamily. Part of the 30S ribosomal subunit. Contacts proteins S3 and S10. Zn(2+) serves as cofactor.

Binds 16S rRNA, required for the assembly of 30S particles and may also be responsible for determining the conformation of the 16S rRNA at the A site. This Clostridium kluyveri (strain NBRC 12016) protein is Small ribosomal subunit protein uS14.